We begin with the raw amino-acid sequence, 163 residues long: Superoxide dismutase [Mn] (163 aa).

Mn(2+) is bound by residues H2, H50, D134, and H138.

This sequence belongs to the iron/manganese superoxide dismutase family. Mn(2+) serves as cofactor.

The catalysed reaction is 2 superoxide + 2 H(+) = H2O2 + O2. Destroys superoxide anion radicals which are normally produced within the cells and which are toxic to biological systems. The sequence is that of Superoxide dismutase [Mn] (sodA) from Mycobacterium scrofulaceum.